We begin with the raw amino-acid sequence, 277 residues long: S-formylglutathione hydrolase FrmB (277 aa).

Active-site charge relay system residues include serine 145, aspartate 221, and histidine 254.

It belongs to the esterase D family.

It carries out the reaction S-formylglutathione + H2O = formate + glutathione + H(+). Its function is as follows. Serine hydrolase involved in the detoxification of formaldehyde. Hydrolyzes S-formylglutathione to glutathione and formate. The protein is S-formylglutathione hydrolase FrmB (frmB) of Escherichia coli (strain K12 / DH10B).